The following is a 151-amino-acid chain: Transcriptional regulator MraZ (151 aa).

SpoVT-AbrB domains lie at 7-53 and 82-125; these read EYDC…SQTE and INEV…SPDL.

This sequence belongs to the MraZ family. In terms of assembly, forms oligomers.

It is found in the cytoplasm. It localises to the nucleoid. This is Transcriptional regulator MraZ from Cytophaga hutchinsonii (strain ATCC 33406 / DSM 1761 / CIP 103989 / NBRC 15051 / NCIMB 9469 / D465).